The chain runs to 519 residues: Cytochrome P450 52A10 (519 aa).

Residue Cys-466 participates in heme binding.

The protein belongs to the cytochrome P450 family. It depends on heme as a cofactor.

It is found in the membrane. Functionally, together with an NADPH cytochrome P450 the enzyme system catalyzes the terminal hydroxylation as the first step in the assimilation of alkanes and fatty acids. The chain is Cytochrome P450 52A10 (CYP52A10) from Candida maltosa (Yeast).